Here is a 337-residue protein sequence, read N- to C-terminus: Glyceraldehyde-3-phosphate dehydrogenase (337 aa).

NAD(+) contacts are provided by residues 12-13 (RI), Asp34, and Lys79. D-glyceraldehyde 3-phosphate contacts are provided by residues 150 to 152 (SCT), Thr181, 210 to 211 (TG), and Arg233. The active-site Nucleophile is Cys151. Asn315 provides a ligand contact to NAD(+).

Belongs to the glyceraldehyde-3-phosphate dehydrogenase family. Homotetramer.

The protein localises to the cytoplasm. It carries out the reaction D-glyceraldehyde 3-phosphate + phosphate + NAD(+) = (2R)-3-phospho-glyceroyl phosphate + NADH + H(+). Its pathway is carbohydrate degradation; glycolysis; pyruvate from D-glyceraldehyde 3-phosphate: step 1/5. The polypeptide is Glyceraldehyde-3-phosphate dehydrogenase (GPD1) (Phaeosphaeria nodorum (strain SN15 / ATCC MYA-4574 / FGSC 10173) (Glume blotch fungus)).